Reading from the N-terminus, the 86-residue chain is Arminin 7246 (86 aa).

Positions 1-18 (MRPEYAVLFLALIALTYA) are cleaved as a signal peptide. Residues 19–57 (RSNEDVREEIKNEIEKDILEDLVEDEGELDDKAIDVNDA) constitute a propeptide that is removed on maturation. A83 is subject to Alanine amide.

This sequence belongs to the arminin family. Expressed in entodermal epithelium along the body column.

It localises to the secreted. It is found in the target cell membrane. Its function is as follows. Antimicrobial peptide with a broad-spectrum antimicrobial activity. Keeps its antibacterial activity under a wide range of salt concentrations that mimic physiological conditions of human blood, which is surprising, since Hydra is an obligate freshwater animal with nearly no salt tolerance. Does not affect red blood cells. This is Arminin 7246 from Hydra viridissima (Green hydra).